Reading from the N-terminus, the 299-residue chain is Plasmodesmata-located protein 5 (299 aa).

Positions 1–25 (MIKTKTTSLLCFLLTAVILMNPSSS) are cleaved as a signal peptide. At 26–264 (SPTDNYIYAV…NKDDNGVGKT (239 aa)) the chain is on the extracellular side. 2 consecutive Gnk2-homologous domains span residues 29–135 (DNYI…NKSF) and 137–237 (GVQD…VGGS). Disulfide bonds link cysteine 36–cysteine 113, cysteine 89–cysteine 98, cysteine 101–cysteine 126, cysteine 148–cysteine 215, cysteine 191–cysteine 200, and cysteine 203–cysteine 228. A helical membrane pass occupies residues 265-285 (LAIIIGIVTLIILLVVFLAFV). Residues 265–285 (LAIIIGIVTLIILLVVFLAFV) form a necessary and sufficient for plasmodesmal targeting region. Residues 286 to 299 (GKCCRKLQDEKWCK) lie on the Cytoplasmic side of the membrane.

It belongs to the cysteine-rich repeat secretory protein family. Plasmodesmata-located proteins (PDLD) subfamily. As to quaternary structure, monomer. Interacts with PDLP1. (Microbial infection) Interacts with Grapevine fanleaf virus (GFLV) 2B-MP. Highly expressed in inflorescence nodes and rosette senescent leaves. Mostly expressed in cell wall junctions between leaf epidermal and mesophyl cells, and to a lesser extent at the cross walls between epidermal or cortex cells within the hypocotyl (at protein level). Low vascular expression in seedling and mature leaf, but high expression in senescing leaves (at protein level).

The protein resides in the cell membrane. It is found in the cell junction. It localises to the plasmodesma. Modulates cell-to-cell trafficking. Has a positive role in innate immunity. Required for systemic acquired resistance (SAR) which is mediated by the signaling molecules azelaic acid (AzA), glycerol-3-phosphate (G3P), and salicylic acid (SA). Negative regulator of plasmodesmata permeability triggered by SA during immune responses, through regulation of callose deposition. Delays the trafficking of Tobacco Mosaic Virus (TMV) movement protein (MP). Required for symplastic signal transport. The chain is Plasmodesmata-located protein 5 from Arabidopsis thaliana (Mouse-ear cress).